Here is a 241-residue protein sequence, read N- to C-terminus: Proteasome subunit alpha (241 aa).

It belongs to the peptidase T1A family. The 20S proteasome core is composed of 14 alpha and 14 beta subunits that assemble into four stacked heptameric rings, resulting in a barrel-shaped structure. The two inner rings, each composed of seven catalytic beta subunits, are sandwiched by two outer rings, each composed of seven alpha subunits. The catalytic chamber with the active sites is on the inside of the barrel. Has a gated structure, the ends of the cylinder being occluded by the N-termini of the alpha-subunits. Is capped at one or both ends by the proteasome regulatory ATPase, PAN.

Its subcellular location is the cytoplasm. With respect to regulation, the formation of the proteasomal ATPase PAN-20S proteasome complex, via the docking of the C-termini of PAN into the intersubunit pockets in the alpha-rings, triggers opening of the gate for substrate entry. Interconversion between the open-gate and close-gate conformations leads to a dynamic regulation of the 20S proteasome proteolysis activity. In terms of biological role, component of the proteasome core, a large protease complex with broad specificity involved in protein degradation. This Saccharolobus islandicus (strain M.16.4 / Kamchatka #3) (Sulfolobus islandicus) protein is Proteasome subunit alpha.